Here is a 350-residue protein sequence, read N- to C-terminus: Protein pelota homolog (350 aa).

The protein belongs to the eukaryotic release factor 1 family. Pelota subfamily. Monomer. A divalent metal cation serves as cofactor.

The protein resides in the cytoplasm. Its function is as follows. May function in recognizing stalled ribosomes, interact with stem-loop structures in stalled mRNA molecules, and effect endonucleolytic cleavage of the mRNA. May play a role in the release non-functional ribosomes and degradation of damaged mRNAs. Has endoribonuclease activity. This chain is Protein pelota homolog, found in Methanosarcina acetivorans (strain ATCC 35395 / DSM 2834 / JCM 12185 / C2A).